We begin with the raw amino-acid sequence, 537 residues long: Tripeptidyl aminopeptidase (537 aa).

Residues Met-1–Ala-36 form the signal peptide. The propeptide occupies Ala-37–Ala-39. Residues Gly-119 to Gly-497 enclose the AB hydrolase-1 domain. Ser-245 functions as the Nucleophile in the catalytic mechanism. Residue Asp-470 is part of the active site. His-499 acts as the Proton donor in catalysis.

This sequence belongs to the peptidase S33 family.

The protein resides in the secreted. Its function is as follows. Cleaves tripeptides from the N-termini of proteins. Does not cleave mono- or dipeptides, or N-terminally blocked peptides. The sequence is that of Tripeptidyl aminopeptidase from Streptomyces lividans.